The sequence spans 116 residues: Ribosome-binding factor A (116 aa).

The protein belongs to the RbfA family. As to quaternary structure, monomer. Binds 30S ribosomal subunits, but not 50S ribosomal subunits or 70S ribosomes.

Its subcellular location is the cytoplasm. Functionally, one of several proteins that assist in the late maturation steps of the functional core of the 30S ribosomal subunit. Associates with free 30S ribosomal subunits (but not with 30S subunits that are part of 70S ribosomes or polysomes). Required for efficient processing of 16S rRNA. May interact with the 5'-terminal helix region of 16S rRNA. This Streptococcus uberis (strain ATCC BAA-854 / 0140J) protein is Ribosome-binding factor A.